A 251-amino-acid polypeptide reads, in one-letter code: Malonyl-[acyl-carrier protein] O-methyltransferase (251 aa).

This sequence belongs to the methyltransferase superfamily.

It catalyses the reaction malonyl-[ACP] + S-adenosyl-L-methionine = malonyl-[ACP] methyl ester + S-adenosyl-L-homocysteine. The protein operates within cofactor biosynthesis; biotin biosynthesis. Converts the free carboxyl group of a malonyl-thioester to its methyl ester by transfer of a methyl group from S-adenosyl-L-methionine (SAM). It allows to synthesize pimeloyl-ACP via the fatty acid synthetic pathway. In Pseudescherichia vulneris (Escherichia vulneris), this protein is Malonyl-[acyl-carrier protein] O-methyltransferase.